The following is a 267-amino-acid chain: MTLFHLILVAVIQGLTEFLPVSSSGHLILLPELSGMADQGQVIDVAVHVGTLFAVVLYFRADVAVAVAGVGRLIRGRIDTPGAFLALCLLIATVPVMVVGLALNLTGLDQALRSMAVIGWTMLIFGIVLYWADQRGPVTRKAGAWTLRHAAIMGLWQALALIPGTSRSGITITGARLLGYGREDAAKLSMLMSIPTILASGGLLGVEVAAQADWALLKDAAIGAVFAFGAALLALTLMMRLLRTVSFTPYVIYRVCLGTILLIIAYS.

A run of 7 helical transmembrane segments spans residues 1 to 21 (MTLF…FLPV), 49 to 69 (VGTL…AVAG), 83 to 103 (AFLA…GLAL), 111 to 131 (ALRS…VLYW), 190 to 210 (MLMS…EVAA), 219 to 239 (DAAI…TLMM), and 245 to 265 (VSFT…LIIA).

It belongs to the UppP family.

It localises to the cell inner membrane. The catalysed reaction is di-trans,octa-cis-undecaprenyl diphosphate + H2O = di-trans,octa-cis-undecaprenyl phosphate + phosphate + H(+). Functionally, catalyzes the dephosphorylation of undecaprenyl diphosphate (UPP). Confers resistance to bacitracin. The chain is Undecaprenyl-diphosphatase from Dinoroseobacter shibae (strain DSM 16493 / NCIMB 14021 / DFL 12).